The following is a 188-amino-acid chain: Elongation factor P (188 aa).

The protein belongs to the elongation factor P family.

It is found in the cytoplasm. It participates in protein biosynthesis; polypeptide chain elongation. Its function is as follows. Involved in peptide bond synthesis. Stimulates efficient translation and peptide-bond synthesis on native or reconstituted 70S ribosomes in vitro. Probably functions indirectly by altering the affinity of the ribosome for aminoacyl-tRNA, thus increasing their reactivity as acceptors for peptidyl transferase. This chain is Elongation factor P, found in Rhodopseudomonas palustris (strain BisA53).